Consider the following 336-residue polypeptide: tRNA N6-adenosine threonylcarbamoyltransferase (336 aa).

Residues His111 and His115 each coordinate Fe cation. Substrate is bound by residues 134–138, Asp167, Gly180, and Asn271; that span reads LVSGG. Asp299 is a Fe cation binding site.

Belongs to the KAE1 / TsaD family. Fe(2+) serves as cofactor.

It is found in the cytoplasm. It carries out the reaction L-threonylcarbamoyladenylate + adenosine(37) in tRNA = N(6)-L-threonylcarbamoyladenosine(37) in tRNA + AMP + H(+). In terms of biological role, required for the formation of a threonylcarbamoyl group on adenosine at position 37 (t(6)A37) in tRNAs that read codons beginning with adenine. Is involved in the transfer of the threonylcarbamoyl moiety of threonylcarbamoyl-AMP (TC-AMP) to the N6 group of A37, together with TsaE and TsaB. TsaD likely plays a direct catalytic role in this reaction. This chain is tRNA N6-adenosine threonylcarbamoyltransferase, found in Thioalkalivibrio sulfidiphilus (strain HL-EbGR7).